We begin with the raw amino-acid sequence, 391 residues long: Transcription factor TCP3 (391 aa).

The interval 1–34 is disordered; sequence MAPDNDHFLDSPSPPLLEMRHHQSATENGGGCGE. The TCP domain maps to 49–107; that stretch reads RKDRHSKVCTAKGPRDRRVRLSAPTAIQFYDVQDRLGFDRPSKAVDWLITKAKSAIDDL. 3 disordered regions span residues 122-168, 317-345, and 363-391; these read HAAA…PASM, HHHH…PGIH, and FRIP…DSRH. The span at 381 to 391 shows a compositional bias: polar residues; sequence KPSSASSDSRH.

As to quaternary structure, interacts with SPL. Interacts with KIN10; KIN11 and FLZ3. Expressed in cotyledons, particularly in the vascular region, in leaves, roots, buds, flowers and immature siliques.

Its subcellular location is the nucleus. Functionally, plays a pivotal role in the control of morphogenesis of shoot organs by negatively regulating the expression of boundary-specific genes such as CUC genes, probably through the induction of miRNA (e.g. miR164). Participates in ovule development. The sequence is that of Transcription factor TCP3 (TCP3) from Arabidopsis thaliana (Mouse-ear cress).